The sequence spans 336 residues: NADH-quinone oxidoreductase subunit H (336 aa).

8 helical membrane passes run 4 to 24 (YILWTALYVLLIVIPLILVVA), 75 to 95 (YLFFIAPILAFAPAYAAWAVI), 108 to 128 (LGLLYILAMTSFSVYGIVIAG), 154 to 174 (MGFAIVGVVIAAGSMGITGII), 181 to 201 (LWHWYFIPLFPLFVVYFIAGI), 233 to 253 (LFFLAEYANMILISILTSIMF), 272 to 292 (FVPGVVWLFAKTGIFMFMFLW), and 308 to 328 (LGWKIFIPLTFVWVVVVACMV).

It belongs to the complex I subunit 1 family. In terms of assembly, NDH-1 is composed of 14 different subunits. Subunits NuoA, H, J, K, L, M, N constitute the membrane sector of the complex.

It localises to the cell inner membrane. It carries out the reaction a quinone + NADH + 5 H(+)(in) = a quinol + NAD(+) + 4 H(+)(out). In terms of biological role, NDH-1 shuttles electrons from NADH, via FMN and iron-sulfur (Fe-S) centers, to quinones in the respiratory chain. The immediate electron acceptor for the enzyme in this species is believed to be ubiquinone. Couples the redox reaction to proton translocation (for every two electrons transferred, four hydrogen ions are translocated across the cytoplasmic membrane), and thus conserves the redox energy in a proton gradient. This subunit may bind ubiquinone. In Francisella philomiragia subsp. philomiragia (strain ATCC 25017 / CCUG 19701 / FSC 153 / O#319-036), this protein is NADH-quinone oxidoreductase subunit H.